A 396-amino-acid polypeptide reads, in one-letter code: Maltose/maltodextrin-binding periplasmic protein (396 aa).

Residues 1-26 (MKIKTGARILALSALTTMMFSASALA) form the signal peptide.

It belongs to the bacterial solute-binding protein 1 family. In terms of assembly, the complex is composed of two ATP-binding proteins (MalK), two transmembrane proteins (MalG and MalF) and a solute-binding protein (MalE).

It localises to the periplasm. Its function is as follows. Part of the ABC transporter complex MalEFGK involved in maltose/maltodextrin import. Binds maltose and higher maltodextrins. The protein is Maltose/maltodextrin-binding periplasmic protein (malE) of Escherichia coli O157:H7.